The chain runs to 2684 residues: Teneurin-1 (2684 aa).

Disordered regions lie at residues 1-37 (MFQHRTTNAQGPPPNRPMPRPPAGMPMMTSSHEHDYT), 127-156 (TTSSTLSPASGQRYLDQPHTSGGAPNPTYS), and 170-204 (GTNQNRRRQQVGTMNNGDPVAGGPMALSKKKKKFD). The Cytoplasmic segment spans residues 1-216 (MFQHRTTNAQ…SDTCSRWPSK (216 aa)). A compositionally biased stretch (pro residues) spans 11–24 (GPPPNRPMPRPPAG). Low complexity predominate over residues 127-136 (TTSSTLSPAS). A helical transmembrane segment spans residues 217–237 (WNILLAAALLVALFVICILLF). The Extracellular portion of the chain corresponds to 238–2684 (RAPNYVYTQP…VHSWKFRKSE (2447 aa)). 2 EGF-like domains span residues 463–499 (TGRTCDEAVCPVVCSGNGVFSGGICVCKSGFKGKECE) and 501–534 (RHNWCEVADCNGRGRCDTDGRCRCNPGWTGEACE). Disulfide bonds link Cys-467–Cys-476, Cys-472–Cys-487, Cys-489–Cys-498, Cys-505–Cys-516, Cys-510–Cys-522, and Cys-524–Cys-533. The segment at 576–614 (PQAQSPPRRGQEPTESSKTRKAQVKPTPTSEKKKESREL) is disordered. Basic and acidic residues-rich tracts occupy residues 584–593 (RGQEPTESSK) and 605–614 (SEKKKESREL). EGF-like domains are found at residues 650–684 (DSVDCSQQACQCVNGDCLDDGSCQCWKGWRGSNCT) and 716–753 (AIDGCPNQCSGKGECGMDRRSSEWSCRCQAGSTGVDCS). 6 disulfides stabilise this stretch: Cys-654-Cys-666, Cys-659-Cys-672, Cys-674-Cys-683, Cys-720-Cys-730, Cys-724-Cys-741, and Cys-743-Cys-752. 4 NHL repeats span residues 1276–1317 (DSCG…IDTT), 1334–1378 (RTCA…VVHD), 1398–1441 (SASA…VRKL), and 1470–1513 (AVSL…VSAR).

It belongs to the tenascin family. Teneurin subfamily. Probably proteolytically processed to generate a N-terminal intracellular domain. In terms of tissue distribution, isoform 1 is mainly expressed in organs derived from the mesoderm, including the pharynx, vulva muscles, gonad distal tip cells, intestine and several tail neurons. Isoform 2 is mainly expressed in the organs derived from the ectoderm, including hypodermal cells, head ganglion neurons and tail neurons (at protein level).

It is found in the nucleus. Its subcellular location is the cell membrane. The protein resides in the membrane. Its function is as follows. Plays a role in the gonadal basement membrane maintenance and/or adhesion early in development. Contributes to the guidance of pharyngeal neurons. This is Teneurin-1 (ten-1) from Caenorhabditis elegans.